Here is a 707-residue protein sequence, read N- to C-terminus: E3 ubiquitin-protein ligase MARCHF7 (707 aa).

An N-acetylmethionine modification is found at Met1. Disordered regions lie at residues 1 to 126 (MESK…QVPR), 157 to 279 (LMDY…RRTT), 294 to 343 (FFSR…RASE), 361 to 425 (SHNH…HIFR), and 444 to 473 (AANR…GRNT). Residues 17 to 33 (SSSLSARMMSGSRGSSL) show a composition bias toward low complexity. A compositionally biased stretch (basic and acidic residues) spans 37–48 (YHSRDSSFRLDS). Over residues 52–65 (STSASASASPFQSA) the composition is skewed to low complexity. Composition is skewed to polar residues over residues 66–83 (WYSE…SQNQ), 95–126 (SCTN…QVPR), 189–212 (NSMS…HQTI), and 254–270 (ISNS…FQES). The span at 294–303 (FFSRRSSQDS) shows a compositional bias: low complexity. Polar residues-rich tracts occupy residues 304-336 (LNTR…TSEV), 373-392 (FNQE…SLRN), and 412-421 (IPTSDTSSRS). 2 positions are modified to phosphoserine: Ser317 and Ser389. Over residues 444–470 (AANRPQASAASSSATTGGSTSDSAQGG) the composition is skewed to low complexity. Residues 544–614 (SEEEEGDLCR…ELCKEKLELN (71 aa)) form an RING-CH-type zinc finger. Cys552, Cys555, Cys570, Cys572, His580, Cys583, Cys604, and Cys607 together coordinate Zn(2+). Phosphothreonine is present on Thr686. Ser687 and Ser691 each carry phosphoserine.

It localises to the cytoplasm. The enzyme catalyses S-ubiquitinyl-[E2 ubiquitin-conjugating enzyme]-L-cysteine + [acceptor protein]-L-lysine = [E2 ubiquitin-conjugating enzyme]-L-cysteine + N(6)-ubiquitinyl-[acceptor protein]-L-lysine.. The protein operates within protein modification; protein ubiquitination. Its function is as follows. E3 ubiquitin-protein ligase which may specifically enhance the E2 activity of HIP2. E3 ubiquitin ligases accept ubiquitin from an E2 ubiquitin-conjugating enzyme in the form of a thioester and then directly transfer the ubiquitin to targeted substrates. May be involved in T-cell proliferation by regulating LIF secretion. May play a role in lysosome homeostasis. Promotes 'Lys-6', 'Lys-11' and 'Lys-63'-linked mixed polyubiquitination on ATG14 leading to the inhibition of autophagy by impairing the interaction between ATG14 and STX7. Participates in the dopamine-mediated negative regulation of the NLRP3 inflammasome by promoting its uibiquitination and subsequent degradation. The chain is E3 ubiquitin-protein ligase MARCHF7 (MARCHF7) from Pongo abelii (Sumatran orangutan).